The primary structure comprises 228 residues: Gliolectin (228 aa).

Residues 1–120 (MLCPPMALGP…NPKAVSQAPR (120 aa)) are Cytoplasmic-facing. A helical; Signal-anchor for type II membrane protein membrane pass occupies residues 121 to 137 (GMALTPAQISASAKLIL). The Extracellular segment spans residues 138–228 (QKCPESDRKK…GTSELADQKQ (91 aa)). Residues 141–228 (PESDRKKSNG…GTSELADQKQ (88 aa)) are disordered. 6 N-linked (GlcNAc...) asparagine glycosylation sites follow: Asn-149, Asn-156, Asn-198, Asn-199, Asn-205, and Asn-218. A compositionally biased stretch (low complexity) spans 195 to 213 (NNNNNSSSSNNNSNMNINN). Residues 218 to 228 (NGTSELADQKQ) show a composition bias toward polar residues.

As to expression, expressed by a subset of glial cells found at the midline of the embryo stage 12 nervous system. Expression is highest during the formation of the embryonic axonal commissures, a process requiring midline glial cell function (at protein level).

It localises to the membrane. Functionally, has a role in intercellular carbohydrate-mediated cell adhesion. The sequence is that of Gliolectin from Drosophila melanogaster (Fruit fly).